An 86-amino-acid chain; its full sequence is MIOREX complex component 7 (86 aa).

Associates with the mitochondrial ribosome.

Its subcellular location is the mitochondrion. Component of MIOREX complexes, large expressome-like assemblies of ribosomes with factors involved in all the steps of post-transcriptional gene expression. The protein is MIOREX complex component 7 of Saccharomyces cerevisiae (strain ATCC 204508 / S288c) (Baker's yeast).